Consider the following 488-residue polypeptide: Stress activated transcription factor atfs-1 (488 aa).

The transit peptide at 1–23 (MFSRVGRLTTFGAQAVSNCPFRR) directs the protein to the mitochondrion. Residues 138 to 191 (SWQNGSSVGHPHGHQQQQQTCQQPPTHSSTTETMHDFSNFGDNMGSPLFQSPSK) form a disordered region. Low complexity predominate over residues 142–168 (GSSVGHPHGHQQQQQTCQQPPTHSSTT). Lys342 participates in a covalent cross-link: Glycyl lysine isopeptide (Lys-Gly) (interchain with G-Cter in smo-1). Residues 353 to 400 (QRDDDDEDYIPASEARRTSSRLNRKSATPTYLRRRDSERSWTPASDDY) form a disordered region. The region spanning 420-483 (DEETDRRRML…NSMKKELRKM (64 aa)) is the bZIP domain. A basic motif region spans residues 425–460 (RRRMLNRIAAVRYREKKRAEKKGRKMEFQEVADRNR). The Nuclear localization signal motif lies at 436-441 (RYREKK). A leucine-zipper region spans residues 462–469 (LLQKERQL).

The protein belongs to the bZIP family. May be desumoylated by ulp-4. Ubiquitously expressed.

It localises to the mitochondrion matrix. The protein resides in the cytoplasm. The protein localises to the nucleus. Its function is as follows. Acts as a transcription factor during mitochondrial stress by activating the mitochondrial unfolded protein response (mtUPR). Induces nuclear and mitochondrial gene transcription, including genes coding for mitochondrial chaperones and proteins involved in glycolysis, amino acid catabolism and innate immunity. Following mitochondrial stress, restores mitochondrial respiratory capacity by limiting the transcription of oxidative phosphorylation (OXPHOS) machinery genes and by promoting the assembly of OXPHOS complexes via the up-regulation of chaperone and assembly factor genes. Component of a feedback loop involving atfs-1, atgl-1 and hlh-11. Acts together with flp-7 to negatively regulate the expression of the transcription regulator hlh-11, to promote expression of atgl-1, and thus atgl-1-dependent fat oxidation in response to mitochondrial stress. In addition, functions with hlh-11 to maintain lifespan. Promotes mtDNA maintenance and propagation of deleterious mtDNA. This is Stress activated transcription factor atfs-1 from Caenorhabditis elegans.